A 178-amino-acid chain; its full sequence is Phosphopantetheine adenylyltransferase (178 aa).

A substrate-binding site is contributed by threonine 17. Residues 17 to 18 and histidine 25 contribute to the ATP site; that span reads TF. The substrate site is built by lysine 49, leucine 86, and arginine 100. ATP-binding positions include 101 to 103, glutamate 111, and 136 to 142; these read GLR and LQPVASR.

Belongs to the bacterial CoaD family. Homohexamer. Requires Mg(2+) as cofactor.

Its subcellular location is the cytoplasm. The catalysed reaction is (R)-4'-phosphopantetheine + ATP + H(+) = 3'-dephospho-CoA + diphosphate. The protein operates within cofactor biosynthesis; coenzyme A biosynthesis; CoA from (R)-pantothenate: step 4/5. In terms of biological role, reversibly transfers an adenylyl group from ATP to 4'-phosphopantetheine, yielding dephospho-CoA (dPCoA) and pyrophosphate. This chain is Phosphopantetheine adenylyltransferase, found in Zymomonas mobilis subsp. mobilis (strain ATCC 31821 / ZM4 / CP4).